A 2325-amino-acid polypeptide reads, in one-letter code: Protein Ycf2 (2325 aa).

3 disordered regions span residues 168 to 189 (SSQL…GTED), 221 to 251 (TEIE…EMNN), and 947 to 1006 (KRKK…KRKE). The span at 230 to 240 (KGLSGSSSKSR) shows a compositional bias: low complexity. Basic and acidic residues-rich tracts occupy residues 241-250 (LFTEGEKEMN) and 955-1004 (KRKE…PEKR). An ATP-binding site is contributed by 1436-1443 (GSIGSGRS). Disordered regions lie at residues 1510 to 1529 (YEDR…DYEP), 1855 to 1996 (LVGS…LLRP), and 2063 to 2179 (PAEE…DGFS). Positions 1861-1976 (TEEEVEGTEE…VEGTEDEEGE (116 aa)) are enriched in acidic residues. The segment covering 1977-1989 (GTEKDSSQFDNDR) has biased composition (basic and acidic residues). Composition is skewed to acidic residues over residues 2063 to 2080 (PAEE…EALE) and 2087 to 2162 (GEEE…ENDS).

The protein belongs to the Ycf2 family.

The protein resides in the plastid. Its subcellular location is the chloroplast stroma. Its function is as follows. Probable ATPase of unknown function. Its presence in a non-photosynthetic plant (Epifagus virginiana) and experiments in tobacco indicate that it has an essential function which is probably not related to photosynthesis. In Oenothera biennis (German evening primrose), this protein is Protein Ycf2.